The chain runs to 65 residues: Hirudin-2' (65 aa).

An interaction with thrombin active site region spans residues 1–3 (ITY). 3 disulfide bridges follow: Cys-6-Cys-14, Cys-16-Cys-28, and Cys-22-Cys-39. Residues 39-65 (CVTGEGTPKPQSHNDGDFEEIPEEYLQ) form a disordered region. O-linked (GalNAc...) threonine glycosylation occurs at Thr-45. The interaction with fibrinogen-binding exosite of thrombin stretch occupies residues 55–65 (DFEEIPEEYLQ). A compositionally biased stretch (acidic residues) spans 55 to 65 (DFEEIPEEYLQ). The residue at position 63 (Tyr-63) is a Sulfotyrosine.

It belongs to the protease inhibitor I14 (hirudin) family.

The protein localises to the secreted. Functionally, hirudin is a potent thrombin-specific protease inhibitor. It forms a stable non-covalent complex with alpha-thrombin, thereby abolishing its ability to cleave fibrinogen. This Hirudo medicinalis (Medicinal leech) protein is Hirudin-2'.